A 246-amino-acid polypeptide reads, in one-letter code: Sugar fermentation stimulation protein homolog (246 aa).

It belongs to the SfsA family.

This chain is Sugar fermentation stimulation protein homolog, found in Prochlorococcus marinus (strain MIT 9301).